The primary structure comprises 272 residues: MLELQRLTKTYATGDTALREVSLAVPRGQVVGLIGPSGAGKSTLIRCINRLVAPSGGRILLGDVDLAAVGRAELRRQRRRIGMIFQEYALVERLTVMENVLSGRLGYVPFWRSFTRRFPGRDIENAYRLLDRVGLLAHADKRADALSGGQRQRVGIARALAQEPALLLVDEPTASLDPKTSRQIMRLILEVCEERDLPAIVNIHDVPLAQQFMHRLVGLHAGEVVFDGAPVALDETVLATIYGAEDWASSGREPAPEREPEDTERHLAEVGR.

The region spanning 2–246 (LELQRLTKTY…VLATIYGAED (245 aa)) is the ABC transporter domain. 35–42 (GPSGAGKS) is a binding site for ATP. Residues 248-272 (ASSGREPAPEREPEDTERHLAEVGR) form a disordered region. The segment covering 254–272 (PAPEREPEDTERHLAEVGR) has biased composition (basic and acidic residues).

The protein belongs to the ABC transporter superfamily. Phosphonates importer (TC 3.A.1.9.1) family. As to quaternary structure, the complex is composed of two ATP-binding proteins (PhnC), two transmembrane proteins (PhnE) and a solute-binding protein (PhnD).

It is found in the cell inner membrane. It carries out the reaction phosphonate(out) + ATP + H2O = phosphonate(in) + ADP + phosphate + H(+). Functionally, part of the ABC transporter complex PhnCDE involved in phosphonates import. Responsible for energy coupling to the transport system. This chain is Phosphonates import ATP-binding protein PhnC, found in Chromohalobacter salexigens (strain ATCC BAA-138 / DSM 3043 / CIP 106854 / NCIMB 13768 / 1H11).